An 833-amino-acid chain; its full sequence is Zinc transporter ZIP10 (833 aa).

Residues 1–25 (MKVHIHTKFCLICLLTFIFHHCNHC) form the signal peptide. Basic and acidic residues predominate over residues 30-48 (DHGPEELHRHHRGMTESES). Disordered regions lie at residues 30-54 (DHGPEELHRHHRGMTESESSKFSVQ) and 137-167 (AENHTTTSVTSKRNHKCDPEKEAAELPIKAD). Over residues 137–147 (AENHTTTSVTS) the composition is skewed to polar residues. Basic and acidic residues predominate over residues 152–167 (KCDPEKEAAELPIKAD). Asn-191 and Asn-198 each carry an N-linked (GlcNAc...) asparagine glycan. Residues 200-209 (SVAHSEHGEP) are compositionally biased toward basic and acidic residues. Disordered stretches follow at residues 200–257 (SVAH…NHDH) and 271–335 (RVHS…EDDR). The N-linked (GlcNAc...) asparagine glycan is linked to Asn-218. A compositionally biased stretch (basic residues) spans 229-241 (VKVRRKEKGKRKK). 2 stretches are compositionally biased toward basic and acidic residues: residues 281–315 (HLPEHSGHELGHGHQELDPDNEGELRHTRKREAPH) and 326–335 (SHKDQSEDDR). An N-linked (GlcNAc...) asparagine glycan is attached at Asn-341. 2 helical membrane passes run 413 to 433 (IISITVISLLSLLGVILVPII) and 440 to 460 (FLLTFLVALAVGTMSGDALLH). The interval 466–485 (QGGHDHSHQHTHGHGHSHGH) is disordered. A helical membrane pass occupies residues 497–517 (VLKGLVALGGIYLLFIIEHCI). Residues Thr-538 and Thr-555 each carry the phosphothreonine modification. Residue Ser-593 is modified to Phosphoserine. The next 4 helical transmembrane spans lie at 689 to 709 (AIGAAFSAGLTGGISTSIAVF), 734 to 754 (IVYNLLSAMMAYIGMLIGTAV), 761 to 781 (ITLWIFAITAGMFLYVALVDM), and 803 to 823 (FILQNLGLLFGFAIMLVIALY).

It belongs to the ZIP transporter (TC 2.A.5) family. In terms of assembly, interacts with SLC39A6. This interaction triggers cells to undergo EMT and mitosis. Found in a complex with SLC39A6, SLC39A10 and with the 'Ser-727' phosphorylated form of STAT3 throughout mitosis. Found in a complex with SLC39A6, SLC39A10 and with NCAM1; this complex controls NCAM1 phosphorylation and integration into focal adhesion complexes during epithelial-tomesenchymal transition. Found in a complex with SLC39A6, SLC39A10 and with GSK3B that controls NCAM1 phosphorylation. In terms of processing, undergoes N-terminal ectodomain shedding. Expressed in the liver, kidney and brain.

The protein resides in the cell membrane. It localises to the apical cell membrane. The catalysed reaction is Zn(2+)(in) = Zn(2+)(out). Zinc-influx transporter. When associated with SLC39A6, the heterodimer formed by SLC39A10 and SLC39A6 mediates cellular zinc uptake to trigger cells to undergo epithelial-to-mesenchymal transition (EMT). mediates cellular zinc uptake to trigger cells to undergo epithelial-to-mesenchymal transition (EMT). SLC39A10-SLC39A6 heterodimers play also an essentiel role in initiating mitosis by importing zinc into cells to initiate a pathway resulting in the onset of mitosis. Plays an important for both mature B-cell maintenance and humoral immune responses. When associated with SLC39A10, the heterodimer controls NCAM1 phosphorylation and integration into focal adhesion complexes during EMT. This chain is Zinc transporter ZIP10, found in Mus musculus (Mouse).